The chain runs to 957 residues: Glycine dehydrogenase (decarboxylating) (957 aa).

Lysine 704 bears the N6-(pyridoxal phosphate)lysine mark.

This sequence belongs to the GcvP family. The glycine cleavage system is composed of four proteins: P, T, L and H. Requires pyridoxal 5'-phosphate as cofactor.

The enzyme catalyses N(6)-[(R)-lipoyl]-L-lysyl-[glycine-cleavage complex H protein] + glycine + H(+) = N(6)-[(R)-S(8)-aminomethyldihydrolipoyl]-L-lysyl-[glycine-cleavage complex H protein] + CO2. Its function is as follows. The glycine cleavage system catalyzes the degradation of glycine. The P protein binds the alpha-amino group of glycine through its pyridoxal phosphate cofactor; CO(2) is released and the remaining methylamine moiety is then transferred to the lipoamide cofactor of the H protein. The polypeptide is Glycine dehydrogenase (decarboxylating) (Bordetella petrii (strain ATCC BAA-461 / DSM 12804 / CCUG 43448)).